The following is a 474-amino-acid chain: Ribulose bisphosphate carboxylase large chain (474 aa).

Substrate-binding residues include asparagine 123 and threonine 173. Lysine 175 acts as the Proton acceptor in catalysis. Lysine 177 lines the substrate pocket. Mg(2+) contacts are provided by lysine 201, aspartate 203, and glutamate 204. An N6-carboxylysine modification is found at lysine 201. Histidine 293 (proton acceptor) is an active-site residue. Residues arginine 294, histidine 326, and serine 378 each contribute to the substrate site.

The protein belongs to the RuBisCO large chain family. Type I subfamily. In terms of assembly, heterohexadecamer of 8 large chains and 8 small chains; disulfide-linked. The disulfide link is formed within the large subunit homodimers. Mg(2+) is required as a cofactor. In terms of processing, the disulfide bond which can form in the large chain dimeric partners within the hexadecamer appears to be associated with oxidative stress and protein turnover.

It localises to the carboxysome. It catalyses the reaction 2 (2R)-3-phosphoglycerate + 2 H(+) = D-ribulose 1,5-bisphosphate + CO2 + H2O. The enzyme catalyses D-ribulose 1,5-bisphosphate + O2 = 2-phosphoglycolate + (2R)-3-phosphoglycerate + 2 H(+). Its function is as follows. RuBisCO catalyzes two reactions: the carboxylation of D-ribulose 1,5-bisphosphate, the primary event in carbon dioxide fixation, as well as the oxidative fragmentation of the pentose substrate in the photorespiration process. Both reactions occur simultaneously and in competition at the same active site. The protein is Ribulose bisphosphate carboxylase large chain of Synechococcus sp.